The sequence spans 200 residues: ATP-dependent Clp protease proteolytic subunit (200 aa).

Ser104 serves as the catalytic Nucleophile. The active site involves His129.

This sequence belongs to the peptidase S14 family. Fourteen ClpP subunits assemble into 2 heptameric rings which stack back to back to give a disk-like structure with a central cavity, resembling the structure of eukaryotic proteasomes.

Its subcellular location is the cytoplasm. The enzyme catalyses Hydrolysis of proteins to small peptides in the presence of ATP and magnesium. alpha-casein is the usual test substrate. In the absence of ATP, only oligopeptides shorter than five residues are hydrolyzed (such as succinyl-Leu-Tyr-|-NHMec, and Leu-Tyr-Leu-|-Tyr-Trp, in which cleavage of the -Tyr-|-Leu- and -Tyr-|-Trp bonds also occurs).. Functionally, cleaves peptides in various proteins in a process that requires ATP hydrolysis. Has a chymotrypsin-like activity. Plays a major role in the degradation of misfolded proteins. In Rubrobacter xylanophilus (strain DSM 9941 / JCM 11954 / NBRC 16129 / PRD-1), this protein is ATP-dependent Clp protease proteolytic subunit.